Reading from the N-terminus, the 92-residue chain is Small ribosomal subunit protein uS19 (92 aa).

The protein belongs to the universal ribosomal protein uS19 family.

Functionally, protein S19 forms a complex with S13 that binds strongly to the 16S ribosomal RNA. This is Small ribosomal subunit protein uS19 from Prochlorococcus marinus (strain MIT 9312).